A 301-amino-acid polypeptide reads, in one-letter code: Probable 5-dehydro-4-deoxyglucarate dehydratase (301 aa).

It belongs to the DapA family.

It carries out the reaction 5-dehydro-4-deoxy-D-glucarate + H(+) = 2,5-dioxopentanoate + CO2 + H2O. It participates in carbohydrate acid metabolism; D-glucarate degradation; 2,5-dioxopentanoate from D-glucarate: step 2/2. The sequence is that of Probable 5-dehydro-4-deoxyglucarate dehydratase from Cereibacter sphaeroides (strain ATCC 17023 / DSM 158 / JCM 6121 / CCUG 31486 / LMG 2827 / NBRC 12203 / NCIMB 8253 / ATH 2.4.1.) (Rhodobacter sphaeroides).